We begin with the raw amino-acid sequence, 958 residues long: MutS protein homolog 4 (958 aa).

Disordered stretches follow at residues 51-110 (QEAA…SFGN) and 124-161 (PVGT…WTPQ). The segment covering 91 to 107 (SSSSSSSPAPASAPGSS) has biased composition (low complexity). 2 stretches are compositionally biased toward polar residues: residues 124–138 (PVGT…TTYP) and 146–161 (SAGN…WTPQ). ATP is bound at residue 702–709 (GPNMSGKS).

This sequence belongs to the DNA mismatch repair MutS family. As to quaternary structure, heterooligomer of MSH4 and MSH5. As to expression, predominantly expressed in testis.

It localises to the chromosome. In terms of biological role, involved in meiotic recombination. Required for reciprocal recombination and proper segregation of homologous chromosomes at meiosis. This Mus musculus (Mouse) protein is MutS protein homolog 4 (Msh4).